The following is a 260-amino-acid chain: Ribonuclease HII (260 aa).

Residues 73 to 260 (LHIAGIDEAG…APVQQQLDIV (188 aa)) enclose the RNase H type-2 domain. A divalent metal cation is bound by residues Asp-79, Glu-80, and Asp-171.

Belongs to the RNase HII family. Mn(2+) serves as cofactor. It depends on Mg(2+) as a cofactor.

It localises to the cytoplasm. It carries out the reaction Endonucleolytic cleavage to 5'-phosphomonoester.. Its function is as follows. Endonuclease that specifically degrades the RNA of RNA-DNA hybrids. The chain is Ribonuclease HII from Desulfitobacterium hafniense (strain Y51).